The following is a 354-amino-acid chain: Thiamine thiazole synthase 1, chloroplastic (354 aa).

The transit peptide at 1 to 45 (MATAAASSLLKSSFAGSRLPAATRTTPASLVVATGPRGAGAGPIC) directs the protein to the chloroplast. Residues alanine 100, 120 to 121 (EQ), glycine 128, and valine 193 contribute to the substrate site. The residue at position 222 (cysteine 222) is a 2,3-didehydroalanine (Cys). Residues aspartate 224, histidine 239, methionine 291, and 301–303 (RMG) each bind substrate.

The protein belongs to the THI4 family. As to quaternary structure, homooctamer. The cofactor is Fe cation. In terms of processing, during the catalytic reaction, a sulfide is transferred from Cys-222 to a reaction intermediate, generating a dehydroalanine residue. Highest expression in developing embryos and green leaves and a very low level expression seen in endosperm, roots, etiolated shoots and immature ears.

It is found in the plastid. The protein resides in the chloroplast. It carries out the reaction [ADP-thiazole synthase]-L-cysteine + glycine + NAD(+) = [ADP-thiazole synthase]-dehydroalanine + ADP-5-ethyl-4-methylthiazole-2-carboxylate + nicotinamide + 3 H2O + 2 H(+). Its function is as follows. Involved in biosynthesis of the thiamine precursor thiazole. Catalyzes the conversion of NAD and glycine to adenosine diphosphate 5-(2-hydroxyethyl)-4-methylthiazole-2-carboxylic acid (ADT), an adenylated thiazole intermediate. The reaction includes an iron-dependent sulfide transfer from a conserved cysteine residue of the protein to a thiazole intermediate. The enzyme can only undergo a single turnover, which suggests it is a suicide enzyme. May have additional roles in adaptation to various stress conditions and in DNA damage tolerance. This chain is Thiamine thiazole synthase 1, chloroplastic, found in Zea mays (Maize).